The chain runs to 642 residues: Serine/threonine-protein kinase pakA (642 aa).

2 stretches are compositionally biased toward polar residues: residues 1–12 and 38–48; these read MSLKKQQQQSDF and LRQSASFTALN. Positions 1-82 are disordered; the sequence is MSLKKQQQQS…GFGTKPRRKN (82 aa). The region spanning 100–113 is the CRIB domain; the sequence is ISAPENPVHVTHVG. 2 disordered regions span residues 180–276 and 317–338; these read GEYP…PIPE and QLDRSRSQPAAAVARPRPRTRQ. 2 stretches are compositionally biased toward low complexity: residues 217 to 227 and 254 to 266; these read SQSSPVPVLSS and VVSNRAPAARPAN. The region spanning 361–612 is the Protein kinase domain; that stretch reads YYNLNKIGQG…AHDLLKHPFM (252 aa). Residues 367–375 and lysine 390 contribute to the ATP site; that span reads IGQGASGGV. The active-site Proton acceptor is the aspartate 480.

The protein belongs to the protein kinase superfamily. STE Ser/Thr protein kinase family. STE20 subfamily.

It localises to the cytoplasm. Its subcellular location is the nucleus. The catalysed reaction is L-seryl-[protein] + ATP = O-phospho-L-seryl-[protein] + ADP + H(+). It carries out the reaction L-threonyl-[protein] + ATP = O-phospho-L-threonyl-[protein] + ADP + H(+). MAP4K component of the MAPK pathway required for the mating pheromone response and the regulation of cell polarity and cell cycle. The chain is Serine/threonine-protein kinase pakA (pakA) from Talaromyces marneffei (Penicillium marneffei).